The chain runs to 124 residues: Large ribosomal subunit protein bL12 (124 aa).

It belongs to the bacterial ribosomal protein bL12 family. Homodimer. Part of the ribosomal stalk of the 50S ribosomal subunit. Forms a multimeric L10(L12)X complex, where L10 forms an elongated spine to which 2 to 4 L12 dimers bind in a sequential fashion. Binds GTP-bound translation factors.

In terms of biological role, forms part of the ribosomal stalk which helps the ribosome interact with GTP-bound translation factors. Is thus essential for accurate translation. The polypeptide is Large ribosomal subunit protein bL12 (Desulforamulus reducens (strain ATCC BAA-1160 / DSM 100696 / MI-1) (Desulfotomaculum reducens)).